We begin with the raw amino-acid sequence, 191 residues long: Thymidine kinase (191 aa).

ATP-binding positions include 15–22 (GPMYSGKT) and 88–91 (DEAQ). Glu89 functions as the Proton acceptor in the catalytic mechanism. Residues Cys145, Cys148, Cys183, and Cys186 each contribute to the Zn(2+) site.

It belongs to the thymidine kinase family. Homotetramer.

Its subcellular location is the cytoplasm. It carries out the reaction thymidine + ATP = dTMP + ADP + H(+). This chain is Thymidine kinase, found in Clostridium botulinum (strain Hall / ATCC 3502 / NCTC 13319 / Type A).